Reading from the N-terminus, the 142-residue chain is Small ribosomal subunit protein uS12 (142 aa).

Belongs to the universal ribosomal protein uS12 family. Part of the 30S ribosomal subunit.

Functionally, with S4 and S5 plays an important role in translational accuracy. Located at the interface of the 30S and 50S subunits. This Archaeoglobus fulgidus (strain ATCC 49558 / DSM 4304 / JCM 9628 / NBRC 100126 / VC-16) protein is Small ribosomal subunit protein uS12.